We begin with the raw amino-acid sequence, 163 residues long: Small ribosomal subunit protein uS7 (163 aa).

This sequence belongs to the universal ribosomal protein uS7 family. In terms of assembly, part of the 30S ribosomal subunit. Contacts proteins S9 and S11.

Functionally, one of the primary rRNA binding proteins, it binds directly to 16S rRNA where it nucleates assembly of the head domain of the 30S subunit. Is located at the subunit interface close to the decoding center, probably blocks exit of the E-site tRNA. The protein is Small ribosomal subunit protein uS7 of Rickettsia bellii (strain RML369-C).